The primary structure comprises 225 residues: NAD(P)H-quinone oxidoreductase subunit K, chloroplastic (225 aa).

The [4Fe-4S] cluster site is built by C43, C44, C108, and C139.

The protein belongs to the complex I 20 kDa subunit family. NDH is composed of at least 16 different subunits, 5 of which are encoded in the nucleus. [4Fe-4S] cluster is required as a cofactor.

Its subcellular location is the plastid. The protein resides in the chloroplast thylakoid membrane. The enzyme catalyses a plastoquinone + NADH + (n+1) H(+)(in) = a plastoquinol + NAD(+) + n H(+)(out). The catalysed reaction is a plastoquinone + NADPH + (n+1) H(+)(in) = a plastoquinol + NADP(+) + n H(+)(out). Functionally, NDH shuttles electrons from NAD(P)H:plastoquinone, via FMN and iron-sulfur (Fe-S) centers, to quinones in the photosynthetic chain and possibly in a chloroplast respiratory chain. The immediate electron acceptor for the enzyme in this species is believed to be plastoquinone. Couples the redox reaction to proton translocation, and thus conserves the redox energy in a proton gradient. The chain is NAD(P)H-quinone oxidoreductase subunit K, chloroplastic from Nandina domestica (Heavenly bamboo).